Here is a 665-residue protein sequence, read N- to C-terminus: Pre-mRNA-processing factor 39 (665 aa).

The span at 1–11 (MQNSHMEEYRN) shows a compositional bias: basic and acidic residues. Positions 1–28 (MQNSHMEEYRNSDNGSTGNSSEVAVVEH) are disordered. A compositionally biased stretch (polar residues) spans 12–22 (SDNGSTGNSSE). The residue at position 44 (Ser-44) is a Phosphoserine. 7 HAT repeats span residues 107–139 (NHLM…LEKR), 141–173 (DNIK…FLKE), 181–216 (ETNT…WENE), 218–251 (GNLR…HVQN), 331–363 (FEEG…FEIE), 365–397 (GTHE…YMEN), and 402–434 (GVRH…QQGN). Basic and acidic residues predominate over residues 599-622 (QDTLKRKAENGSEEPEEKKAHTED). Residues 599 to 625 (QDTLKRKAENGSEEPEEKKAHTEDLSS) are disordered.

The protein belongs to the PRP39 family.

The protein localises to the nucleus. Involved in pre-mRNA splicing. The sequence is that of Pre-mRNA-processing factor 39 (Prpf39) from Mus musculus (Mouse).